Here is a 94-residue protein sequence, read N- to C-terminus: Alpha-galactosyl-binding lectin (94 aa).

In terms of assembly, homodimer. Contains three disulfide bonds.

Alpha-galactosyl-binding lectin with preference for galactose-alpha-1,4-galactose. The polypeptide is Alpha-galactosyl-binding lectin (Lyophyllum decastes (Fried chicken mushroom)).